Consider the following 229-residue polypeptide: UPF0758 protein Cbei_0490 (229 aa).

The 123-residue stretch at 107–229 (KITSPKDLAS…FVSLKERGLI (123 aa)) folds into the MPN domain. Residues histidine 178, histidine 180, and aspartate 191 each contribute to the Zn(2+) site. Residues 178 to 191 (HNHPSGDPTPSRED) carry the JAMM motif motif.

This sequence belongs to the UPF0758 family.

The polypeptide is UPF0758 protein Cbei_0490 (Clostridium beijerinckii (strain ATCC 51743 / NCIMB 8052) (Clostridium acetobutylicum)).